The sequence spans 162 residues: Peptide methionine sulfoxide reductase MsrA (162 aa).

Cys16 is an active-site residue.

It belongs to the MsrA Met sulfoxide reductase family.

It catalyses the reaction L-methionyl-[protein] + [thioredoxin]-disulfide + H2O = L-methionyl-(S)-S-oxide-[protein] + [thioredoxin]-dithiol. It carries out the reaction [thioredoxin]-disulfide + L-methionine + H2O = L-methionine (S)-S-oxide + [thioredoxin]-dithiol. Functionally, has an important function as a repair enzyme for proteins that have been inactivated by oxidation. Catalyzes the reversible oxidation-reduction of methionine sulfoxide in proteins to methionine. This is Peptide methionine sulfoxide reductase MsrA from Geobacter sulfurreducens (strain ATCC 51573 / DSM 12127 / PCA).